Reading from the N-terminus, the 543-residue chain is Rop guanine nucleotide exchange factor 11 (543 aa).

The interval 61 to 89 (QPGKCGSVDRPSLPIGGVTPNRNDKLPRV) is disordered. A PRONE domain is found at 95–456 (MEALIILQAA…QLTQEPTNNA (362 aa)).

In terms of assembly, interacts with ARAC4/ROP2, ARAC3/ROP, ARAC9/ROP8, PHYA and PHYB. As to expression, highly expressed in elongating regions of roots and pollen grains. Expressed in flowers, and at lower levels in leaves and stems.

Its subcellular location is the cytoplasm. In terms of biological role, guanine-nucleotide exchange factor (GEF) that acts as an activator of Rop (Rho of plants) GTPases by promoting the exchange of GDP for GTP. Functions as a light-signaling switch that functions in root growth and development through the activation of Rop in a phytochrome-dependent manner. May act as a negative regulator of phytochrome-mediated primary root development. This is Rop guanine nucleotide exchange factor 11 (ROPGEF11) from Arabidopsis thaliana (Mouse-ear cress).